The following is a 324-amino-acid chain: Elongation factor P--(R)-beta-lysine ligase (324 aa).

A substrate-binding site is contributed by 75–77; sequence SPE. ATP is bound by residues 99–101 and asparagine 108; that span reads RNE. Tyrosine 117 serves as a coordination point for substrate. 243 to 244 is a binding site for ATP; the sequence is EL. Glutamate 250 provides a ligand contact to substrate. Glycine 299 is an ATP binding site.

This sequence belongs to the class-II aminoacyl-tRNA synthetase family. EpmA subfamily. In terms of assembly, homodimer.

It carries out the reaction D-beta-lysine + L-lysyl-[protein] + ATP = N(6)-((3R)-3,6-diaminohexanoyl)-L-lysyl-[protein] + AMP + diphosphate + H(+). In terms of biological role, with EpmB is involved in the beta-lysylation step of the post-translational modification of translation elongation factor P (EF-P). Catalyzes the ATP-dependent activation of (R)-beta-lysine produced by EpmB, forming a lysyl-adenylate, from which the beta-lysyl moiety is then transferred to the epsilon-amino group of a conserved specific lysine residue in EF-P. The sequence is that of Elongation factor P--(R)-beta-lysine ligase from Vibrio cholerae serotype O1 (strain ATCC 39315 / El Tor Inaba N16961).